The sequence spans 309 residues: MPIRVLDELPAVNFLREENVFVMTTSRASGQEIRPLKVLILNLMPKKIETENQFLRLLSNSPLQVDVQLLRIDARESRNTPAEHLNNFYCNFEDICDQNFDGLIVTGAPLGLVEFNDVAYWPQIKQVLEWAKDHVTSTLFVCWAVQAALNILYGIPKQTRTDKLSGVYEHHILHPHALLTRGFDDSFLAPHSRYADFPAALIRDYTDLEILAETEDGDAYLFASKDKRIAFVTGHPEYDAHTLASEYFRDVEAGLSPNVPYNYFPKNDPQNKPRATWRSHGNLLFTNWLNYYVYQITPYDLRHMNPTLD.

Cys-142 (acyl-thioester intermediate) is an active-site residue. 2 residues coordinate substrate: Lys-163 and Ser-192. His-235 functions as the Proton acceptor in the catalytic mechanism. Glu-237 is a catalytic residue. Position 249 (Arg-249) interacts with substrate.

It belongs to the MetA family.

It localises to the cytoplasm. The enzyme catalyses L-homoserine + succinyl-CoA = O-succinyl-L-homoserine + CoA. The protein operates within amino-acid biosynthesis; L-methionine biosynthesis via de novo pathway; O-succinyl-L-homoserine from L-homoserine: step 1/1. Transfers a succinyl group from succinyl-CoA to L-homoserine, forming succinyl-L-homoserine. The chain is Homoserine O-succinyltransferase from Citrobacter koseri (strain ATCC BAA-895 / CDC 4225-83 / SGSC4696).